The chain runs to 267 residues: NAD kinase 2 (267 aa).

Catalysis depends on Asp-52, which acts as the Proton acceptor. Residues 52-53, 124-125, Arg-151, Asp-153, 164-169, and Ala-188 contribute to the NAD(+) site; these read DA, NE, and TAYNKS.

This sequence belongs to the NAD kinase family. Requires a divalent metal cation as cofactor.

The protein localises to the cytoplasm. It catalyses the reaction NAD(+) + ATP = ADP + NADP(+) + H(+). Functionally, involved in the regulation of the intracellular balance of NAD and NADP, and is a key enzyme in the biosynthesis of NADP. Catalyzes specifically the phosphorylation on 2'-hydroxyl of the adenosine moiety of NAD to yield NADP. In Bacillus cereus (strain ATCC 10987 / NRS 248), this protein is NAD kinase 2.